Consider the following 247-residue polypeptide: DNA polymerase sliding clamp (247 aa).

Belongs to the PCNA family. As to quaternary structure, homotrimer. The subunits circularize to form a toroid; DNA passes through its center. Replication factor C (RFC) is required to load the toroid on the DNA.

Its function is as follows. Sliding clamp subunit that acts as a moving platform for DNA processing. Responsible for tethering the catalytic subunit of DNA polymerase and other proteins to DNA during high-speed replication. In Methanoculleus marisnigri (strain ATCC 35101 / DSM 1498 / JR1), this protein is DNA polymerase sliding clamp.